The sequence spans 32 residues: MSDIN-like toxin proprotein 2 (32 aa).

A propeptide spanning residues 1–10 (MSDINATRVP) is cleaved from the precursor. Positions 11–17 (AWLAECP) form a cross-link, cyclopeptide (Ala-Pro). A propeptide spanning residues 18-32 (CVGDDISHLLTRGEK) is cleaved from the precursor.

The protein belongs to the MSDIN fungal toxin family. Processed by the macrocyclase-peptidase enzyme POPB to yield a toxic cyclic heptapeptide. POPB first removes 10 residues from the N-terminus. Conformational trapping of the remaining peptide forces the enzyme to release this intermediate rather than proceed to macrocyclization. The enzyme rebinds the remaining peptide in a different conformation and catalyzes macrocyclization of the N-terminal 7 residues.

Functionally, probable toxin that belongs to the MSDIN-like toxin family responsible for a large number of food poisoning cases and deaths. The chain is MSDIN-like toxin proprotein 2 from Amanita rimosa.